A 407-amino-acid polypeptide reads, in one-letter code: Peptidase T (407 aa).

His-82 lines the Zn(2+) pocket. Asp-84 is an active-site residue. Asp-143 serves as a coordination point for Zn(2+). The active-site Proton acceptor is the Glu-177. 3 residues coordinate Zn(2+): Glu-178, Asp-200, and His-382.

This sequence belongs to the peptidase M20B family. It depends on Zn(2+) as a cofactor.

Its subcellular location is the cytoplasm. It catalyses the reaction Release of the N-terminal residue from a tripeptide.. Its function is as follows. Cleaves the N-terminal amino acid of tripeptides. This Streptococcus equi subsp. equi (strain 4047) protein is Peptidase T.